The following is a 598-amino-acid chain: Elongation factor 4 (598 aa).

A tr-type G domain is found at 2-184 (KNIRNFSIIA…EIVHKIPAPE (183 aa)). Residues 14–19 (DHGKST) and 131–134 (NKID) contribute to the GTP site.

It belongs to the TRAFAC class translation factor GTPase superfamily. Classic translation factor GTPase family. LepA subfamily.

The protein localises to the cell inner membrane. It catalyses the reaction GTP + H2O = GDP + phosphate + H(+). In terms of biological role, required for accurate and efficient protein synthesis under certain stress conditions. May act as a fidelity factor of the translation reaction, by catalyzing a one-codon backward translocation of tRNAs on improperly translocated ribosomes. Back-translocation proceeds from a post-translocation (POST) complex to a pre-translocation (PRE) complex, thus giving elongation factor G a second chance to translocate the tRNAs correctly. Binds to ribosomes in a GTP-dependent manner. This is Elongation factor 4 from Pasteurella multocida (strain Pm70).